Reading from the N-terminus, the 483-residue chain is Cobyric acid synthase (483 aa).

Residues 251–438 enclose the GATase cobBQ-type domain; it reads ALIVAVPMLP…LHGVFSADRF (188 aa). C333 serves as the catalytic Nucleophile. Residue H430 is part of the active site.

The protein belongs to the CobB/CobQ family. CobQ subfamily.

Its pathway is cofactor biosynthesis; adenosylcobalamin biosynthesis. In terms of biological role, catalyzes amidations at positions B, D, E, and G on adenosylcobyrinic A,C-diamide. NH(2) groups are provided by glutamine, and one molecule of ATP is hydrogenolyzed for each amidation. In Brucella suis (strain ATCC 23445 / NCTC 10510), this protein is Cobyric acid synthase.